A 351-amino-acid chain; its full sequence is MTQEILGEVQTGKIPLKGRTLKELSEIMVSLGEKSFRAKQIYHGLYVNRYESWEQFTTFSKTLKEKLEGLCSLTQLTVVKHLKSVDGTQKFTFASEQGKEFEAVWIPSGDGGRKTICISSQVGCTLNCKFCATAKLEFQGNLKAHEIVDQVLQVEKIVGDNATNVVFMGMGEPFHNYFNVIRAASILHDPDALNLGAKRITISTSGVVNGIRRFIENKEPYNFAISLNHPDPNGRLQIMDIEEKFALSELLQAAKDFTRELKRRITFEYVMIPGVSMGPENANKLVKIARSLDCKINVIPLNTEFFGWRRPTKQEVAEFITLLEPAGVPILNRRSPGKDIFGACGMLASKS.

Glutamate 102 acts as the Proton acceptor in catalysis. One can recognise a Radical SAM core domain in the interval 110–339 (DGGRKTICIS…ILNRRSPGKD (230 aa)). An intrachain disulfide couples cysteine 117 to cysteine 344. Residues cysteine 124, cysteine 128, and cysteine 131 each coordinate [4Fe-4S] cluster. Residues 171–172 (GE), serine 203, 226–228 (SLN), and asparagine 302 each bind S-adenosyl-L-methionine. Cysteine 344 functions as the S-methylcysteine intermediate in the catalytic mechanism.

It belongs to the radical SAM superfamily. RlmN family. [4Fe-4S] cluster is required as a cofactor.

The protein localises to the cytoplasm. It carries out the reaction adenosine(2503) in 23S rRNA + 2 reduced [2Fe-2S]-[ferredoxin] + 2 S-adenosyl-L-methionine = 2-methyladenosine(2503) in 23S rRNA + 5'-deoxyadenosine + L-methionine + 2 oxidized [2Fe-2S]-[ferredoxin] + S-adenosyl-L-homocysteine. The catalysed reaction is adenosine(37) in tRNA + 2 reduced [2Fe-2S]-[ferredoxin] + 2 S-adenosyl-L-methionine = 2-methyladenosine(37) in tRNA + 5'-deoxyadenosine + L-methionine + 2 oxidized [2Fe-2S]-[ferredoxin] + S-adenosyl-L-homocysteine. Functionally, specifically methylates position 2 of adenine 2503 in 23S rRNA and position 2 of adenine 37 in tRNAs. This is Probable dual-specificity RNA methyltransferase RlmN from Leptospira borgpetersenii serovar Hardjo-bovis (strain JB197).